Consider the following 517-residue polypeptide: MSPLALVSVSDKKNIIPFCTELVEKFNYKILSSGGTAKHLMEAKIPVIKVADFTNSPEILGGRVKTLHPKIHGGILAKRTDEEHKKDIEAYDLELIELVVVNLYPFKKTVEKGSKWEDAIENIDIGGPSMIRSAAKNHKDVSVLVDPSQYQEFIEESKKGELKETYKAKLALEAFQHTADYDTAISNWIRKERGLQSSKYIESYPLIKTLRYGENPHQKAFWYGLNNIGWNSAEQLQGKELSYNNLLDLESALSTVLEFGYEEKDELTTETFASVILKHNNPCGASIGNSASQAFLNALKCDSVSAFGGIVAFNSNVDSETAINLKDIFLECVVAPSFDPEALEILKIKKNLRILKFSKDQIPNKNQTSTKSIMGGLLVQDTDNIEEKTESWITVTKKFPSTQDYLDLSFAWKICKHIKSNAIVIAKDQQTLGIGAGQMNRVGASKIALQAAKENGYGGVLASDGFFPFADTVELANEYGINSIIQPGGSIRDEESIEMCNLKGISMVFTNKRHFLH.

In terms of domain architecture, MGS-like spans 1 to 145; sequence MSPLALVSVS…KNHKDVSVLV (145 aa).

The protein belongs to the PurH family.

It carries out the reaction (6R)-10-formyltetrahydrofolate + 5-amino-1-(5-phospho-beta-D-ribosyl)imidazole-4-carboxamide = 5-formamido-1-(5-phospho-D-ribosyl)imidazole-4-carboxamide + (6S)-5,6,7,8-tetrahydrofolate. It catalyses the reaction IMP + H2O = 5-formamido-1-(5-phospho-D-ribosyl)imidazole-4-carboxamide. It functions in the pathway purine metabolism; IMP biosynthesis via de novo pathway; 5-formamido-1-(5-phospho-D-ribosyl)imidazole-4-carboxamide from 5-amino-1-(5-phospho-D-ribosyl)imidazole-4-carboxamide (10-formyl THF route): step 1/1. It participates in purine metabolism; IMP biosynthesis via de novo pathway; IMP from 5-formamido-1-(5-phospho-D-ribosyl)imidazole-4-carboxamide: step 1/1. This Prochlorococcus marinus subsp. pastoris (strain CCMP1986 / NIES-2087 / MED4) protein is Bifunctional purine biosynthesis protein PurH.